The sequence spans 560 residues: Membrane protein insertase YidC (560 aa).

The next 6 helical transmembrane spans lie at 5-25 (IINL…WQYF), 334-354 (AIDF…MNFF), 357-377 (YVGN…LLMF), 431-451 (LPIL…YVTI), 476-496 (LFGL…WPIL), and 522-542 (FMPL…LIYW).

This sequence belongs to the OXA1/ALB3/YidC family. Type 1 subfamily. In terms of assembly, interacts with the Sec translocase complex via SecD. Specifically interacts with transmembrane segments of nascent integral membrane proteins during membrane integration.

It is found in the cell inner membrane. In terms of biological role, required for the insertion and/or proper folding and/or complex formation of integral membrane proteins into the membrane. Involved in integration of membrane proteins that insert both dependently and independently of the Sec translocase complex, as well as at least some lipoproteins. Aids folding of multispanning membrane proteins. The chain is Membrane protein insertase YidC from Rickettsia conorii (strain ATCC VR-613 / Malish 7).